The chain runs to 137 residues: ATP synthase epsilon chain (137 aa).

It belongs to the ATPase epsilon chain family. F-type ATPases have 2 components, CF(1) - the catalytic core - and CF(0) - the membrane proton channel. CF(1) has five subunits: alpha(3), beta(3), gamma(1), delta(1), epsilon(1). CF(0) has three main subunits: a, b and c.

The protein resides in the cellular thylakoid membrane. Produces ATP from ADP in the presence of a proton gradient across the membrane. The chain is ATP synthase epsilon chain from Nostoc punctiforme (strain ATCC 29133 / PCC 73102).